The following is a 40-amino-acid chain: Photosystem I reaction center subunit IX (40 aa).

Residues 4–24 traverse the membrane as a helical segment; that stretch reads FFESWPMAAVLWVWLTAGIIV.

It belongs to the PsaJ family.

The protein resides in the cellular thylakoid membrane. May help in the organization of the PsaE and PsaF subunits. The polypeptide is Photosystem I reaction center subunit IX (Prochlorococcus marinus (strain MIT 9313)).